A 356-amino-acid chain; its full sequence is Uroporphyrinogen decarboxylase (356 aa).

Substrate-binding positions include 27–31 (RQAGR), D77, Y154, T209, and H327.

This sequence belongs to the uroporphyrinogen decarboxylase family. In terms of assembly, homodimer.

It localises to the cytoplasm. It carries out the reaction uroporphyrinogen III + 4 H(+) = coproporphyrinogen III + 4 CO2. Its pathway is porphyrin-containing compound metabolism; protoporphyrin-IX biosynthesis; coproporphyrinogen-III from 5-aminolevulinate: step 4/4. Functionally, catalyzes the decarboxylation of four acetate groups of uroporphyrinogen-III to yield coproporphyrinogen-III. The protein is Uroporphyrinogen decarboxylase of Cellvibrio japonicus (strain Ueda107) (Pseudomonas fluorescens subsp. cellulosa).